Here is an 834-residue protein sequence, read N- to C-terminus: Ras GTPase-activating protein 3 (834 aa).

C2 domains follow at residues methionine 1–phenylalanine 112 and valine 123–tyrosine 263. Alanine 2 carries the post-translational modification N-acetylalanine. A Phosphotyrosine modification is found at tyrosine 66. Serine 77 is subject to Phosphoserine. Threonine 110 carries the phosphothreonine modification. The Ras-GAP domain maps to glycine 346 to isoleucine 561. In terms of domain architecture, PH spans isoleucine 576 to glutamine 677. A Btk-type zinc finger spans residues asparagine 679–glycine 715. Zn(2+)-binding residues include histidine 687, cysteine 698, cysteine 699, and cysteine 709. Phosphoserine is present on residues serine 809 and serine 833.

In terms of biological role, inhibitory regulator of the Ras-cyclic AMP pathway. Binds inositol tetrakisphosphate (IP4). This is Ras GTPase-activating protein 3 (Rasa3) from Rattus norvegicus (Rat).